A 133-amino-acid polypeptide reads, in one-letter code: Ribosome-binding factor A (133 aa).

This sequence belongs to the RbfA family. As to quaternary structure, monomer. Binds 30S ribosomal subunits, but not 50S ribosomal subunits or 70S ribosomes.

The protein localises to the cytoplasm. In terms of biological role, one of several proteins that assist in the late maturation steps of the functional core of the 30S ribosomal subunit. Associates with free 30S ribosomal subunits (but not with 30S subunits that are part of 70S ribosomes or polysomes). Required for efficient processing of 16S rRNA. May interact with the 5'-terminal helix region of 16S rRNA. This Acinetobacter baumannii (strain AB307-0294) protein is Ribosome-binding factor A.